Reading from the N-terminus, the 873-residue chain is Aminopeptidase M1-D (873 aa).

Residues 96 to 203 (LGEGVLAMRF…MSTYLVAIVV (108 aa)) are required for membrane association. Substrate-binding positions include glutamate 136 and 269–273 (GAMEN). Histidine 305 contacts Zn(2+). Residue glutamate 306 is the Proton acceptor of the active site. Residues histidine 309 and glutamate 328 each contribute to the Zn(2+) site. Positions 721–722 (LL) match the Dileucine internalization motif motif.

It belongs to the peptidase M1 family. Homodimer. The cofactor is Zn(2+).

It localises to the membrane. The protein localises to the microsome membrane. Its subcellular location is the cytoplasm. It carries out the reaction Release of an N-terminal amino acid, Xaa-|-Yaa- from a peptide, amide or arylamide. Xaa is preferably Ala, but may be most amino acids including Pro (slow action). When a terminal hydrophobic residue is followed by a prolyl residue, the two may be released as an intact Xaa-Pro dipeptide.. This chain is Aminopeptidase M1-D, found in Oryza sativa subsp. japonica (Rice).